The following is a 367-amino-acid chain: Protein-glutamate methylesterase/protein-glutamine glutaminase 1 (367 aa).

In terms of domain architecture, Response regulatory spans 9 to 126 (KVLCVDDSAL…RDGMLDYSEK (118 aa)). At Asp60 the chain carries 4-aspartylphosphate. The 193-residue stretch at 168–360 (LVSTEKLIIV…RRIMARLASM (193 aa)) folds into the CheB-type methylesterase domain. Residues Ser180, His206, and Asp302 contribute to the active site.

This sequence belongs to the CheB family. In terms of processing, phosphorylated by CheA. Phosphorylation of the N-terminal regulatory domain activates the methylesterase activity.

The protein resides in the cytoplasm. The catalysed reaction is [protein]-L-glutamate 5-O-methyl ester + H2O = L-glutamyl-[protein] + methanol + H(+). It carries out the reaction L-glutaminyl-[protein] + H2O = L-glutamyl-[protein] + NH4(+). Functionally, involved in chemotaxis. Part of a chemotaxis signal transduction system that modulates chemotaxis in response to various stimuli. Catalyzes the demethylation of specific methylglutamate residues introduced into the chemoreceptors (methyl-accepting chemotaxis proteins or MCP) by CheR. Also mediates the irreversible deamidation of specific glutamine residues to glutamic acid. This Burkholderia pseudomallei (strain K96243) protein is Protein-glutamate methylesterase/protein-glutamine glutaminase 1.